Here is a 62-residue protein sequence, read N- to C-terminus: UPF0434 protein Rpic_2808 (62 aa).

This sequence belongs to the UPF0434 family.

This is UPF0434 protein Rpic_2808 from Ralstonia pickettii (strain 12J).